The sequence spans 100 residues: Urease subunit gamma (100 aa).

It belongs to the urease gamma subunit family. As to quaternary structure, heterotrimer of UreA (gamma), UreB (beta) and UreC (alpha) subunits. Three heterotrimers associate to form the active enzyme.

The protein resides in the cytoplasm. The enzyme catalyses urea + 2 H2O + H(+) = hydrogencarbonate + 2 NH4(+). The protein operates within nitrogen metabolism; urea degradation; CO(2) and NH(3) from urea (urease route): step 1/1. The polypeptide is Urease subunit gamma (Polynucleobacter asymbioticus (strain DSM 18221 / CIP 109841 / QLW-P1DMWA-1) (Polynucleobacter necessarius subsp. asymbioticus)).